The primary structure comprises 89 residues: Small ribosomal subunit protein bS20 (89 aa).

Positions 1 to 26 (MANSPQAKKRARQNEKNRKHNASLRS) are disordered. Residues 7 to 22 (AKKRARQNEKNRKHNA) are compositionally biased toward basic residues.

The protein belongs to the bacterial ribosomal protein bS20 family.

Binds directly to 16S ribosomal RNA. This is Small ribosomal subunit protein bS20 from Marinobacter nauticus (strain ATCC 700491 / DSM 11845 / VT8) (Marinobacter aquaeolei).